The chain runs to 332 residues: uncharacterized protein (332 aa).

A signal peptide spans 1–32 (MSRDRGARGLRKYGRFALATGAATALSLTASG). The N-palmitoyl cysteine moiety is linked to residue C33. C33 is lipidated: S-diacylglycerol cysteine.

The protein localises to the cell membrane. This is an uncharacterized protein from Streptomyces avermitilis (strain ATCC 31267 / DSM 46492 / JCM 5070 / NBRC 14893 / NCIMB 12804 / NRRL 8165 / MA-4680).